A 229-amino-acid chain; its full sequence is NAD(P)H-quinone oxidoreductase subunit K, chloroplastic (229 aa).

[4Fe-4S] cluster-binding residues include C43, C44, C108, and C139.

The protein belongs to the complex I 20 kDa subunit family. NDH is composed of at least 16 different subunits, 5 of which are encoded in the nucleus. [4Fe-4S] cluster serves as cofactor.

It localises to the plastid. The protein localises to the chloroplast thylakoid membrane. It carries out the reaction a plastoquinone + NADH + (n+1) H(+)(in) = a plastoquinol + NAD(+) + n H(+)(out). The catalysed reaction is a plastoquinone + NADPH + (n+1) H(+)(in) = a plastoquinol + NADP(+) + n H(+)(out). Functionally, NDH shuttles electrons from NAD(P)H:plastoquinone, via FMN and iron-sulfur (Fe-S) centers, to quinones in the photosynthetic chain and possibly in a chloroplast respiratory chain. The immediate electron acceptor for the enzyme in this species is believed to be plastoquinone. Couples the redox reaction to proton translocation, and thus conserves the redox energy in a proton gradient. The protein is NAD(P)H-quinone oxidoreductase subunit K, chloroplastic of Coffea arabica (Arabian coffee).